A 169-amino-acid chain; its full sequence is S-ribosylhomocysteine lyase (169 aa).

Fe cation contacts are provided by H54, H58, and C128.

Belongs to the LuxS family. In terms of assembly, homodimer. The cofactor is Fe cation.

The enzyme catalyses S-(5-deoxy-D-ribos-5-yl)-L-homocysteine = (S)-4,5-dihydroxypentane-2,3-dione + L-homocysteine. In terms of biological role, involved in the synthesis of autoinducer 2 (AI-2) which is secreted by bacteria and is used to communicate both the cell density and the metabolic potential of the environment. The regulation of gene expression in response to changes in cell density is called quorum sensing. Catalyzes the transformation of S-ribosylhomocysteine (RHC) to homocysteine (HC) and 4,5-dihydroxy-2,3-pentadione (DPD). This chain is S-ribosylhomocysteine lyase, found in Tolumonas auensis (strain DSM 9187 / NBRC 110442 / TA 4).